We begin with the raw amino-acid sequence, 253 residues long: Probable glutathione transferase omega-2 (253 aa).

The 81-residue stretch at 25 to 105 (GIYRIYNMRF…YLDDLFPESR (81 aa)) folds into the GST N-terminal domain. C35 acts as the Nucleophile in catalysis. Glutathione contacts are provided by residues K62, V75, and 89–90 (ES). Residues 110–238 (DPYEKVQQKL…SQPTEMGVGF (129 aa)) form the GST C-terminal domain.

The protein belongs to the GST superfamily. Omega family.

It catalyses the reaction RX + glutathione = an S-substituted glutathione + a halide anion + H(+). The enzyme catalyses L-dehydroascorbate + 2 glutathione = glutathione disulfide + L-ascorbate. The catalysed reaction is methylarsonate + 2 glutathione + H(+) = methylarsonous acid + glutathione disulfide + H2O. Exhibits glutathione-dependent thiol transferase activity. Has dehydroascorbate reductase activity and may contribute to the recycling of ascorbic acid. Participates in the biotransformation of inorganic arsenic and reduces monomethylarsonic acid (MMA). This is Probable glutathione transferase omega-2 from Caenorhabditis briggsae.